We begin with the raw amino-acid sequence, 927 residues long: Cell division control protein 15 (927 aa).

Residues 20–273 enclose the F-BAR domain; it reads VKFRDNFWGS…TLENTNIDED (254 aa). Residues 108 to 207 are a coiled coil; the sequence is QQINTELRNK…AEYRETNELL (100 aa). A compositionally biased stretch (low complexity) spans 321–354; the sequence is SRPSASASLASSPTRSAFRPKTSETVSSEVVSSP. Disordered stretches follow at residues 321-370, 390-409, 423-495, 509-550, and 597-857; these read SRPS…SNEQ, ESQK…VTSP, VRSS…TSLG, PTSP…DELE, and SSSM…VDPR. Phosphoserine occurs at positions 331 and 332. Residues 397 to 409 are compositionally biased toward polar residues; sequence TGSSMRRPSVTSP. Basic and acidic residues predominate over residues 444-461; the sequence is PEVKEGKNSENAITKDND. Composition is skewed to polar residues over residues 465–482, 513–546, and 616–625; these read LSSQ…SRLS, FMGS…SVQS, and LSKTSSSTRL. Thr-529 is subject to Phosphothreonine. Residues Ser-636 and Ser-639 each carry the phosphoserine modification. The segment covering 658–675 has biased composition (polar residues); the sequence is TSAQMQRMSNSFASQTKQ. Residues 680 to 691 are compositionally biased toward basic and acidic residues; that stretch reads QRTENSARESLR. Over residues 695 to 714 the composition is skewed to low complexity; it reads SNMSRSPSPMLSRRSSTLRP. Ser-700 carries the phosphoserine modification. 2 stretches are compositionally biased toward polar residues: residues 718-730 and 739-775; these read RSAS…QSDV and ARGQ…SVSP. Residue Ser-774 is modified to Phosphoserine. Residues 784–813 are compositionally biased toward low complexity; the sequence is SSSVLQSQKSTSSNTSNRNNGGYSGSRPSS. Polar residues predominate over residues 823–853; it reads SGRSMRQVSQRSTSRARSPEPTNRNSVQSKN. In terms of domain architecture, SH3 spans 866 to 927; that stretch reads PILGYVIALY…LFPSNFVQTV (62 aa).

The protein resides in the cytoplasm. The protein localises to the cytoskeleton. After the onset of mitosis, forms a ring-like structure which colocalizes with the medial actin ring. Appears to mediate cytoskeletal rearrangements required for cytokinesis. Essential for viability. The chain is Cell division control protein 15 (cdc15) from Schizosaccharomyces pombe (strain 972 / ATCC 24843) (Fission yeast).